A 672-amino-acid chain; its full sequence is F(420)H(2) dehydrogenase subunit L (672 aa).

16 helical membrane passes run E8–G28, I37–L57, I79–I99, I136–F156, V179–F199, I225–V245, T265–A285, L298–V318, M337–F357, I360–V380, V394–I414, Y447–M467, P483–L503, L545–I565, F601–I621, and T652–L672.

The protein belongs to the complex I subunit 5 family. The FPO complex is composed of at least 13 different subunits. FpoA, FpoH, FpoJ, FpoK, FpoL, FpoM and FpoN proteins constitute the membrane sector of the complex.

It is found in the cell membrane. The enzyme catalyses methanophenazine + reduced coenzyme F420-(gamma-L-Glu)(n) = dihydromethanophenazine + oxidized coenzyme F420-(gamma-L-Glu)(n) + H(+). In terms of biological role, component of the F(420)H(2) dehydrogenase (FPO complex) which is part of the energy-conserving F(420)H(2):heterodisulfide oxidoreductase system. The membrane-bound electron transfer system of the complex plays an important role in the metabolism of methylotrophic methanogens when the organisms grow on methanol or methylamines. Catalyzes the oxidation of methanophenazine to dihydromethanophenazine. It shuttles electrons from F(420)H(2), via FAD and iron-sulfur (Fe-S) centers, to methanophenazine (an electron carrier in the membrane). It couples the redox reaction to proton translocation (for every two electrons transferred, two hydrogen ions are translocated across the cytoplasmic membrane), and thus conserves the redox energy in a proton gradient. It also catalyzes the oxidation of F(420)H(2) with quinones such as 2,3-dimethyl-1,4-naphthoquinone, 2-methyl-1,4-naphthoquinone and tetramethyl-p-benzoquinone. This Methanosarcina mazei (strain ATCC BAA-159 / DSM 3647 / Goe1 / Go1 / JCM 11833 / OCM 88) (Methanosarcina frisia) protein is F(420)H(2) dehydrogenase subunit L (fpoL).